Reading from the N-terminus, the 408-residue chain is Putative UPF0496 protein 2 (408 aa).

Transmembrane regions (helical) follow at residues 224-244 and 252-272; these read RIAR…AIVA and ALVG…GAAR. Positions 385 to 408 are disordered; the sequence is MARGLPPPSPATVTTTSEERLTSS.

Belongs to the UPF0496 family.

It localises to the membrane. The polypeptide is Putative UPF0496 protein 2 (Oryza sativa subsp. indica (Rice)).